The sequence spans 203 residues: Selenocysteine-containing peroxiredoxin PrxU (203 aa).

Residues 2–160 form the Thioredoxin domain; sequence VSVGKKAPDF…TLRQIQAFQL (159 aa). Sec-47 is an active-site residue. A non-standard amino acid (selenocysteine) is located at residue Sec-47.

The protein belongs to the peroxiredoxin family. AhpC/Prx1 subfamily.

The catalysed reaction is a hydroperoxide + [thioredoxin]-dithiol = an alcohol + [thioredoxin]-disulfide + H2O. In terms of biological role, thiol-specific peroxidase that catalyzes the reduction of hydrogen peroxide and organic hydroperoxides to water and alcohols, respectively. Plays a role in cell protection against oxidative stress by detoxifying peroxides. The chain is Selenocysteine-containing peroxiredoxin PrxU from Peptoclostridium acidaminophilum (Eubacterium acidaminophilum).